The chain runs to 207 residues: Fibroblast growth factor 18 (207 aa).

Residues 1-27 (MYSAPSTCTCLCLHFLLLCFQVQVLAA) form the signal peptide. N-linked (GlcNAc...) asparagine glycosylation is present at Asn-39. A disulfide bridge links Cys-109 with Cys-127. N-linked (GlcNAc...) asparagine glycosylation is present at Asn-137.

This sequence belongs to the heparin-binding growth factors family. As to quaternary structure, interacts with FGFR3 and FGFR4.

The protein localises to the secreted. Functionally, plays an important role in the regulation of cell proliferation, cell differentiation and cell migration. Required for normal ossification and bone development. Stimulates hepatic and intestinal proliferation. This chain is Fibroblast growth factor 18 (FGF18), found in Bos taurus (Bovine).